The chain runs to 391 residues: Saxitoxin and tetrodotoxin-binding protein 2 (391 aa).

Positions 1–20 (MGAVPGVVLLLMLAVLGIRA) are cleaved as a signal peptide. Repeat copies occupy residues 24–202 (PEEC…HKKS) and 203–391 (PEEC…PEQD). N-linked (GlcNAc...) asparagine glycosylation is found at Asn41, Asn54, Asn63, Asn97, Asn234, Asn268, Asn277, and Asn307.

As to quaternary structure, homodimer or heterodimer of PSTBP1 and PSTBP2. In terms of processing, glycosylated.

It is found in the secreted. Binds both saxitoxin and tetradotoxin. May play a role in toxin accumulation and/or excretion. In Takifugu pardalis (Panther puffer), this protein is Saxitoxin and tetrodotoxin-binding protein 2 (psbp2).